The primary structure comprises 267 residues: Cytochrome b (267 aa).

Transmembrane regions (helical) follow at residues 4-24, 48-69, 84-104, and 149-169; these read FGSL…LLAA, WLIR…YLHI, WNTG…GYVL, and FFTL…IHLT. The heme b site is built by histidine 54 and histidine 68. Heme b contacts are provided by histidine 153 and histidine 167. Residue histidine 172 participates in a ubiquinone binding. Transmembrane regions (helical) follow at residues 197-217 and 259-267; these read LKDI…ALFA and LGGVLALAA.

It belongs to the cytochrome b family. As to quaternary structure, the cytochrome bc1 complex contains 11 subunits: 3 respiratory subunits (MT-CYB, CYC1 and UQCRFS1), 2 core proteins (UQCRC1 and UQCRC2) and 6 low-molecular weight proteins (UQCRH/QCR6, UQCRB/QCR7, UQCRQ/QCR8, UQCR10/QCR9, UQCR11/QCR10 and a cleavage product of UQCRFS1). This cytochrome bc1 complex then forms a dimer. Heme b serves as cofactor.

Its subcellular location is the mitochondrion inner membrane. Functionally, component of the ubiquinol-cytochrome c reductase complex (complex III or cytochrome b-c1 complex) that is part of the mitochondrial respiratory chain. The b-c1 complex mediates electron transfer from ubiquinol to cytochrome c. Contributes to the generation of a proton gradient across the mitochondrial membrane that is then used for ATP synthesis. This is Cytochrome b (MT-CYB) from Raphus cucullatus (Dodo).